A 258-amino-acid polypeptide reads, in one-letter code: UPF0246 protein YE0603 (258 aa).

This sequence belongs to the UPF0246 family.

The polypeptide is UPF0246 protein YE0603 (Yersinia enterocolitica serotype O:8 / biotype 1B (strain NCTC 13174 / 8081)).